The following is a 150-amino-acid chain: 3-hydroxyacyl-[acyl-carrier-protein] dehydratase FabZ (150 aa).

The active site involves histidine 53.

This sequence belongs to the thioester dehydratase family. FabZ subfamily.

The protein resides in the cytoplasm. The enzyme catalyses a (3R)-hydroxyacyl-[ACP] = a (2E)-enoyl-[ACP] + H2O. In terms of biological role, involved in unsaturated fatty acids biosynthesis. Catalyzes the dehydration of short chain beta-hydroxyacyl-ACPs and long chain saturated and unsaturated beta-hydroxyacyl-ACPs. In Photorhabdus laumondii subsp. laumondii (strain DSM 15139 / CIP 105565 / TT01) (Photorhabdus luminescens subsp. laumondii), this protein is 3-hydroxyacyl-[acyl-carrier-protein] dehydratase FabZ.